The primary structure comprises 201 residues: B-cell CLL/lymphoma 7 protein family member A (201 aa).

A disordered region spans residues 46 to 201 (YKWVPVTEPK…GKIDSSSEES (156 aa)). The segment covering 54–71 (PKSDDNKNKKKGKDDKYG) has biased composition (basic and acidic residues). Polar residues-rich tracts occupy residues 73–83 (EVTTPENSSSP), 93–114 (SNQS…NTSP), and 133–142 (QYPSKQPSSG). Residues 158 to 167 (TSKRDSKSQG) are compositionally biased toward basic and acidic residues. The segment covering 168–179 (DSESFLDSSKSA) has biased composition (polar residues). Basic and acidic residues predominate over residues 192 to 201 (GKIDSSSEES).

The protein belongs to the BCL7 family.

The polypeptide is B-cell CLL/lymphoma 7 protein family member A (bcl7a) (Danio rerio (Zebrafish)).